A 916-amino-acid chain; its full sequence is MDYKDTLLMPKTDFPMRGGLPNKEPKIQEEWDAKNIYQKVLDKNEGNPSFILHDGPPYANGNLHMGHALNKILKDIITRYKSMLGYYAPYVPGWDTHGLPIEQALTKKGVKRKELSIAEFRKKCEAFALEQIDNQKKDFKRLGVKGDFNNPYITLKPEYEAAQIRLFGEMADKGLIYKGKKPVYWSPSSESSLAEAEIEYQDKRSPSIYVAFDVIDGKGIVDDDAQFIIWTTTPWTLPSNVAITVHPDLTYGQYNVNGKKYIIGKDLASDVAEALDWDEDTLELEKEFKGKDLEYIKAQHPFFDRESLVINGLHVTTDAGTGCVHTAPGHGEDDYIVGQKYNLPVISPVDDKGVFTDEAGQFEGMFYDKANKEITDLLKEDGSLLKLEFITHSYPHDWRTKKPVIFRATPQWFASIDKVREDILSAIDDTQFKVDWGKTRIYNMIRDRGEWVISRQRVWGVPLPVFYAENGDIIMTSETVNHVADLFEANGSNIWFEREAKDLLPEGFTHPGSPNGEFTKETDIMDVWFDSGSSHRGVLEARPELSYPADLYLEGSDQYRGWFNSSITTSVATRGQSPYKMLLSHGFVMDGEGKKMSKSLGNVIVPDQIVKQKGADIARLWVSSVDYLADVRISDEILKQSSDVYRKIRNTLRFMLGNVSDYNPATDAIAEKDLLEVDKYLLNRLREFTANTLDHYDNYDYLDIYQEVQNFINVELSNFYLDYGKDILYIEERDSHKRRSMQTVLYQIVVDMTKLLAPILVHTAEEVWSHIPHVEEESVHLTNMPERVEIDQAFVDRWNTFMKLRDDVNRALEVARNEKVIGKSLEAKVVIGSNENFDATTFLQQFKDLQQLFITSQAEVVDKVDDGVAYQHGDIRIEHAHGEKCERCWNYSEELGSVGELDNLCPRCQAVVKTLV.

Residues 57 to 67 carry the 'HIGH' region motif; it reads PYANGNLHMGH. Glu-554 lines the L-isoleucyl-5'-AMP pocket. Positions 595 to 599 match the 'KMSKS' region motif; the sequence is KMSKS. Residue Lys-598 participates in ATP binding. Zn(2+)-binding residues include Cys-885, Cys-888, Cys-905, and Cys-908.

It belongs to the class-I aminoacyl-tRNA synthetase family. IleS type 1 subfamily. As to quaternary structure, monomer. It depends on Zn(2+) as a cofactor.

It localises to the cytoplasm. The catalysed reaction is tRNA(Ile) + L-isoleucine + ATP = L-isoleucyl-tRNA(Ile) + AMP + diphosphate. Catalyzes the attachment of isoleucine to tRNA(Ile). As IleRS can inadvertently accommodate and process structurally similar amino acids such as valine, to avoid such errors it has two additional distinct tRNA(Ile)-dependent editing activities. One activity is designated as 'pretransfer' editing and involves the hydrolysis of activated Val-AMP. The other activity is designated 'posttransfer' editing and involves deacylation of mischarged Val-tRNA(Ile). The sequence is that of Isoleucine--tRNA ligase from Staphylococcus saprophyticus subsp. saprophyticus (strain ATCC 15305 / DSM 20229 / NCIMB 8711 / NCTC 7292 / S-41).